A 658-amino-acid chain; its full sequence is Probable transketolase (658 aa).

Substrate is bound at residue histidine 24. Thiamine diphosphate is bound by residues histidine 64 and 113 to 115; that span reads GPL. Aspartate 154 serves as a coordination point for Mg(2+). Thiamine diphosphate contacts are provided by glycine 155 and asparagine 184. Asparagine 184 and isoleucine 186 together coordinate Mg(2+). Substrate contacts are provided by histidine 259, arginine 354, and serine 381. Position 259 (histidine 259) interacts with thiamine diphosphate. Glutamate 408 functions as the Proton donor in the catalytic mechanism. Phenylalanine 434 is a thiamine diphosphate binding site. Positions 458, 466, and 517 each coordinate substrate.

Belongs to the transketolase family. As to quaternary structure, homodimer. It depends on Mg(2+) as a cofactor. Requires Ca(2+) as cofactor. Mn(2+) serves as cofactor. Co(2+) is required as a cofactor. The cofactor is thiamine diphosphate.

It catalyses the reaction D-sedoheptulose 7-phosphate + D-glyceraldehyde 3-phosphate = aldehydo-D-ribose 5-phosphate + D-xylulose 5-phosphate. Functionally, necessary for high-efficiency recombination chromosomal DNA during genetic transformation. Its function is as follows. Catalyzes the transfer of a two-carbon ketol group from a ketose donor to an aldose acceptor, via a covalent intermediate with the cofactor thiamine pyrophosphate. The chain is Probable transketolase (tkt) from Streptococcus pneumoniae serotype 4 (strain ATCC BAA-334 / TIGR4).